A 139-amino-acid chain; its full sequence is uncharacterized protein (139 aa).

Transmembrane regions (helical) follow at residues Cys-19 to Gly-39, Ile-64 to Phe-84, and Ala-89 to Gly-109.

The protein localises to the cell membrane. This is an uncharacterized protein from Methanocaldococcus jannaschii (strain ATCC 43067 / DSM 2661 / JAL-1 / JCM 10045 / NBRC 100440) (Methanococcus jannaschii).